The following is a 298-amino-acid chain: MSSHIAKSESKTSLLKAAAASGGSRAPRHSSARDPGLRGRRLPGPCPDSPATCGDPSSRRPLCRPVPRDEGARGSRRGLPQAHCRPRETLPPARGRDGEERGLAPALSLRGSLRSRGRGDPAPAGTPEADPFLHQLRPMLSSAFGQDRSLRPEEIEELREAFREFDKDKDGYINCRDLGNCMRTMGYMPTEMELIELSQQINMNLGGHVDFDDFVELMGPKLLAETADMIGVKELRDAFREFDTNGDGEISTSELREAMRKLLGHQVGHRDIEEIIRDVDLNGDGRVDFEEFVRMMSR.

Residues 1–10 (MSSHIAKSES) show a composition bias toward basic and acidic residues. The tract at residues 1–131 (MSSHIAKSES…APAGTPEADP (131 aa)) is disordered. A lipid anchor (N-myristoyl glycine) is attached at serine 2. A lipid anchor (S-palmitoyl cysteine) is attached at histidine 4. A compositionally biased stretch (low complexity) spans 11–25 (KTSLLKAAAASGGSR). EF-hand domains are found at residues 153 to 188 (EEIE…MGYM), 207 to 224 (GHVD…KLLA), 230 to 265 (IGVK…LLGH), and 267 to 298 (VGHR…MMSR). Aspartate 166, aspartate 168, aspartate 170, tyrosine 172, and aspartate 177 together coordinate Ca(2+). 4 residues coordinate Ca(2+): aspartate 243, asparagine 245, aspartate 247, and glutamate 249. Phosphoserine is present on serine 251. 6 residues coordinate Ca(2+): glutamate 254, aspartate 280, asparagine 282, aspartate 284, arginine 286, and glutamate 291.

In terms of assembly, interacts with ITPR1, ITPR2 and ITPR3. The strength of this interaction inversely correlates with calcium concentration. Interacts with CACNA1A (via C-terminal CDB motif) in the pre- and postsynaptic membranes. Interacts with CACNA1C. Interacts with CACNA1D. Interacts (via EF-hands 1 and 2) at microtubules with MAP1LC3B. Interacts (via EF-hands 1 and 2) with NSMF (via the central NLS-containing motif region), the interaction occurs in a calcium dependent manner after synaptic NMDA receptor stimulation and prevents nuclear import of NSMF. Interacts with MYO1C and TRPC5. Interacts with SPACA9. Phosphorylated. The phosphorylation regulates the activity. As to expression, somatodendritic compartment of neurons. Restricted expression in retina to a subpopulation of amacrine, bipolar, and ganglion cells. According to PubMed:11906216, expression is heterogeneous within brain regions and their major cell types and does not match with those of marker proteins for characterized neuronal subpopulations. Isoform 2: Minor isoform expressed in the brain, in the granule cell layer of the cerebellum, at low level. Not developmentally regulated. Isoform 3: Minor isoform expressed in the brain, in the granule cell layer. of the cerebellum, at low level. Not developmentally regulated.

The protein resides in the cytoplasm. The protein localises to the cytoskeleton. Modulates calcium-dependent activity of inositol 1,4,5-triphosphate receptors (ITPRs). Inhibits agonist-induced intracellular calcium signaling. Enhances inactivation and does not support calcium-dependent facilitation of voltage-dependent P/Q-type calcium channels. Causes calcium-dependent facilitation and inhibits inactivation of L-type calcium channels by binding to the same sites as calmodulin in the C-terminal domain of CACNA1C, but has an opposite effect on channel function. Suppresses the calcium-dependent inactivation of CACNA1D. Inhibits TRPC5 channels. Prevents NMDA receptor-induced cellular degeneration. Required for the normal transfer of light signals through the retina. The protein is Calcium-binding protein 1 (Cabp1) of Rattus norvegicus (Rat).